Here is a 215-residue protein sequence, read N- to C-terminus: Small ribosomal subunit protein uS3 (215 aa).

The KH type-2 domain maps to valine 39–arginine 107.

Belongs to the universal ribosomal protein uS3 family. Part of the 30S ribosomal subunit. Forms a tight complex with proteins S10 and S14.

Binds the lower part of the 30S subunit head. Binds mRNA in the 70S ribosome, positioning it for translation. In Nitrosomonas europaea (strain ATCC 19718 / CIP 103999 / KCTC 2705 / NBRC 14298), this protein is Small ribosomal subunit protein uS3.